Reading from the N-terminus, the 638-residue chain is MINLSLYQTNSLSYTIIWMLFVIPSCVLSVDERQKHCSPTFRCGKQTDLYYPFWSPDREECGHPVFKVNCSGDFAEFTISTVKFHVLEMNYESRIIRLVRTEYLNNLCPWHPENRSINQEVLPFLQDTELGTFYYNCSGPTVDELANGYIRQLGCDEEVGGKSYFVSSPSHPGNRAILDGLSASCERNVDIPVSRSAMETTATNQSLEAIKKVLDVGFELGFNSDCSLCVASKGACGFNQSSKAFVCYCKDEPHEHTCGKMGIGIGLGCGFLGATLITVCLLCFFFQKRRTSHHLRPRDNNLKGLVQLKQYSYAEVRKITKLFSHTLGKGGFGTVYGGNLCDGRKVAVKILKDFKSNGEDFINEVASMSQTSHVNIVSLLGFCYEGSKRAIVYEFLENGSLDQFLSEKKSLNLDVSTLYRIALGVARGLDYLHHGCKTRIVHFDIKPQNILLDDTFCPKVSDFGLAKLCEKRESILSLLDARGTIGYIAPEVFSGMYGRVSHKSDVYSYGMLVLEMIGAKNKEIEETAASNSSSAYFPDWIYKNLENGEDTWKFGDEISREDKEVAKKMTLVGLWCIQPSPLNRPPMNRIVEMMEGSLDVLEVPPKPSIHYSAEPLPQLSSFSEENSIYTEVFIGSTS.

The signal sequence occupies residues 1–29 (MINLSLYQTNSLSYTIIWMLFVIPSCVLS). The Extracellular portion of the chain corresponds to 30–264 (VDERQKHCSP…EHTCGKMGIG (235 aa)). Residues Asn69, Asn114, Asn136, Asn204, and Asn239 are each glycosylated (N-linked (GlcNAc...) asparagine). A helical transmembrane segment spans residues 265-285 (IGLGCGFLGATLITVCLLCFF). Over 286–638 (FQKRRTSHHL…YTEVFIGSTS (353 aa)) the chain is Cytoplasmic. The region spanning 321–609 (KLFSHTLGKG…VLEVPPKPSI (289 aa)) is the Protein kinase domain. Residues 327–335 (LGKGGFGTV) and Lys349 each bind ATP. Tyr393 is modified (phosphotyrosine). The active-site Proton acceptor is the Asp444. Thr484 is modified (phosphothreonine).

This sequence belongs to the protein kinase superfamily. Ser/Thr protein kinase family.

It is found in the membrane. It carries out the reaction L-seryl-[protein] + ATP = O-phospho-L-seryl-[protein] + ADP + H(+). The catalysed reaction is L-threonyl-[protein] + ATP = O-phospho-L-threonyl-[protein] + ADP + H(+). This chain is LEAF RUST 10 DISEASE-RESISTANCE LOCUS RECEPTOR-LIKE PROTEIN KINASE-like 2.1, found in Arabidopsis thaliana (Mouse-ear cress).